The sequence spans 249 residues: Hydroxyacylglutathione hydrolase (249 aa).

Zn(2+)-binding residues include His-53, His-55, Asp-57, His-58, His-110, Asp-127, and His-165.

The protein belongs to the metallo-beta-lactamase superfamily. Glyoxalase II family. In terms of assembly, monomer. Zn(2+) serves as cofactor.

It carries out the reaction an S-(2-hydroxyacyl)glutathione + H2O = a 2-hydroxy carboxylate + glutathione + H(+). It functions in the pathway secondary metabolite metabolism; methylglyoxal degradation; (R)-lactate from methylglyoxal: step 2/2. Its function is as follows. Thiolesterase that catalyzes the hydrolysis of S-D-lactoyl-glutathione to form glutathione and D-lactic acid. This is Hydroxyacylglutathione hydrolase from Hamiltonella defensa subsp. Acyrthosiphon pisum (strain 5AT).